The primary structure comprises 129 residues: Small ribosomal subunit protein uS11 (129 aa).

Belongs to the universal ribosomal protein uS11 family. As to quaternary structure, part of the 30S ribosomal subunit. Interacts with proteins S7 and S18. Binds to IF-3.

Its function is as follows. Located on the platform of the 30S subunit, it bridges several disparate RNA helices of the 16S rRNA. Forms part of the Shine-Dalgarno cleft in the 70S ribosome. The sequence is that of Small ribosomal subunit protein uS11 from Desulforamulus reducens (strain ATCC BAA-1160 / DSM 100696 / MI-1) (Desulfotomaculum reducens).